Reading from the N-terminus, the 53-residue chain is Chlorophyll a-b binding protein 1, chloroplastic (53 aa).

Residue phenylalanine 18 coordinates chlorophyll b. Positions 48 and 51 each coordinate chlorophyll a. Arginine 53 is a binding site for chlorophyll b.

The protein belongs to the light-harvesting chlorophyll a/b-binding (LHC) protein family. In terms of assembly, the LHC complex consists of chlorophyll a-b binding proteins. The cofactor is Binds at least 14 chlorophylls (8 Chl-a and 6 Chl-b) and carotenoids such as lutein and neoxanthin.. In terms of processing, photoregulated by reversible phosphorylation of its threonine residues.

The protein localises to the plastid. It localises to the chloroplast thylakoid membrane. In terms of biological role, the light-harvesting complex (LHC) functions as a light receptor, it captures and delivers excitation energy to photosystems with which it is closely associated. This Populus euphratica (Euphrates poplar) protein is Chlorophyll a-b binding protein 1, chloroplastic.